The sequence spans 124 residues: UPF0102 protein Mmc1_3298 (124 aa).

It belongs to the UPF0102 family.

The protein is UPF0102 protein Mmc1_3298 of Magnetococcus marinus (strain ATCC BAA-1437 / JCM 17883 / MC-1).